A 367-amino-acid chain; its full sequence is 3-ketodihydrosphingosine reductase ksrA (367 aa).

A helical membrane pass occupies residues 12-32; the sequence is ASPATLGISLILCGFIVYSVS. NADPH contacts are provided by glycine 53, serine 55, glycine 57, arginine 78, lysine 82, aspartate 108, and leucine 109. Positions 53–57 match the GXSXG motif; sequence GGSDG. Residues 193–213 form a helical membrane-spanning segment; it reads LIFTCSTLAFVSIAGYAPYSP. Residue tyrosine 211 is the Proton acceptor of the active site. Tyrosine 211, lysine 215, and isoleucine 259 together coordinate NADP(+). The active-site Lowers pKa of active site Tyr is lysine 215.

The protein belongs to the short-chain dehydrogenases/reductases (SDR) family.

The protein resides in the endoplasmic reticulum membrane. It carries out the reaction sphinganine + NADP(+) = 3-oxosphinganine + NADPH + H(+). The protein operates within lipid metabolism; sphingolipid metabolism. In terms of biological role, catalyzes the reduction of 3'-oxosphinganine (3-ketodihydrosphingosine/KDS) to sphinganine (dihydrosphingosine/DHS), the second step of de novo sphingolipid biosynthesis. The sequence is that of 3-ketodihydrosphingosine reductase ksrA from Aspergillus fumigatus (strain ATCC MYA-4609 / CBS 101355 / FGSC A1100 / Af293) (Neosartorya fumigata).